Consider the following 166-residue polypeptide: Ubiquitin-conjugating enzyme E2 13 (166 aa).

The region spanning 4 to 164 is the UBC core domain; sequence QACLLLQKQL…VSRCVRKSQE (161 aa). The active-site Glycyl thioester intermediate is the C89.

The protein belongs to the ubiquitin-conjugating enzyme family.

It carries out the reaction S-ubiquitinyl-[E1 ubiquitin-activating enzyme]-L-cysteine + [E2 ubiquitin-conjugating enzyme]-L-cysteine = [E1 ubiquitin-activating enzyme]-L-cysteine + S-ubiquitinyl-[E2 ubiquitin-conjugating enzyme]-L-cysteine.. It functions in the pathway protein modification; protein ubiquitination. Accepts the ubiquitin from the E1 complex and catalyzes its covalent attachment to other proteins. Involved in the formation of multiubiquitin chains. Signal the protein for selective degradation. This Arabidopsis thaliana (Mouse-ear cress) protein is Ubiquitin-conjugating enzyme E2 13 (UBC13).